The following is a 336-amino-acid chain: Large ribosomal subunit protein uL1m (336 aa).

The transit peptide at 1–50 directs the protein to the mitochondrion; that stretch reads MAAAVRCLRRVLIHHQRHCLCKMASQASLYPCSVNSLLHNRHFAAAAAAA. Position 85 is a phosphoserine (serine 85).

Belongs to the universal ribosomal protein uL1 family.

The protein resides in the mitochondrion. The polypeptide is Large ribosomal subunit protein uL1m (Mrpl1) (Mus musculus (Mouse)).